The following is a 362-amino-acid chain: 3-dehydroquinate synthase (362 aa).

Residues 71 to 76 (DGEQYK), 105 to 109 (GVVGD), 129 to 130 (TT), Lys142, Lys151, and 169 to 172 (CLKT) contribute to the NAD(+) site. 3 residues coordinate Zn(2+): Glu184, His247, and His264.

The protein belongs to the sugar phosphate cyclases superfamily. Dehydroquinate synthase family. Requires Co(2+) as cofactor. Zn(2+) is required as a cofactor. The cofactor is NAD(+).

It is found in the cytoplasm. The enzyme catalyses 7-phospho-2-dehydro-3-deoxy-D-arabino-heptonate = 3-dehydroquinate + phosphate. It participates in metabolic intermediate biosynthesis; chorismate biosynthesis; chorismate from D-erythrose 4-phosphate and phosphoenolpyruvate: step 2/7. In terms of biological role, catalyzes the conversion of 3-deoxy-D-arabino-heptulosonate 7-phosphate (DAHP) to dehydroquinate (DHQ). This chain is 3-dehydroquinate synthase, found in Escherichia coli (strain K12 / MC4100 / BW2952).